A 247-amino-acid polypeptide reads, in one-letter code: GTP cyclohydrolase 1 type 2 homolog (247 aa).

Residues H63, H64, D101, H215, and E219 each coordinate a divalent metal cation.

It belongs to the GTP cyclohydrolase I type 2/NIF3 family. Homohexamer.

In Yersinia pestis, this protein is GTP cyclohydrolase 1 type 2 homolog.